The sequence spans 249 residues: 3-deoxy-manno-octulosonate cytidylyltransferase (249 aa).

It belongs to the KdsB family.

It is found in the cytoplasm. The catalysed reaction is 3-deoxy-alpha-D-manno-oct-2-ulosonate + CTP = CMP-3-deoxy-beta-D-manno-octulosonate + diphosphate. Its pathway is nucleotide-sugar biosynthesis; CMP-3-deoxy-D-manno-octulosonate biosynthesis; CMP-3-deoxy-D-manno-octulosonate from 3-deoxy-D-manno-octulosonate and CTP: step 1/1. It participates in bacterial outer membrane biogenesis; lipopolysaccharide biosynthesis. In terms of biological role, activates KDO (a required 8-carbon sugar) for incorporation into bacterial lipopolysaccharide in Gram-negative bacteria. This is 3-deoxy-manno-octulosonate cytidylyltransferase from Serratia proteamaculans (strain 568).